Here is a 211-residue protein sequence, read N- to C-terminus: Ras-related protein RABB1c (211 aa).

Serine 2 is modified (N-acetylserine). GTP is bound at residue 13-21 (GDTGVGKSC). An Effector region motif is present at residues 35 to 43 (HDLTIGVEF). Residues 61 to 65 (DTAGQ), 119 to 122 (NKCD), and 149 to 151 (SAK) each bind GTP. Residues cysteine 209 and cysteine 210 are each lipidated (S-geranylgeranyl cysteine).

Belongs to the small GTPase superfamily. Rab family.

It localises to the cell membrane. Intracellular vesicle trafficking and protein transport. In Arabidopsis thaliana (Mouse-ear cress), this protein is Ras-related protein RABB1c (RABB1C).